Reading from the N-terminus, the 431-residue chain is Selenocysteine lyase (431 aa).

Lys239 bears the N6-(pyridoxal phosphate)lysine mark. Catalysis depends on Cys367, which acts as the S-selanylcysteine intermediate.

Belongs to the class-V pyridoxal-phosphate-dependent aminotransferase family. As to quaternary structure, homodimer. Requires pyridoxal 5'-phosphate as cofactor.

It is found in the cytoplasm. The protein resides in the cytosol. The catalysed reaction is L-selenocysteine + AH2 = hydrogenselenide + L-alanine + A + H(+). Functionally, catalyzes the decomposition of L-selenocysteine to L-alanine and elemental selenium. The polypeptide is Selenocysteine lyase (scly) (Xenopus tropicalis (Western clawed frog)).